The following is a 156-amino-acid chain: MNINATLFGELLAFIFFVWFCMKFVWPPIMGAIEERQKKIADGLAASERGEKDLELAQAKATEQLKEAKTQAAGIIEQAKKRGSQIVDEETQRAHQERENIIAQGHAEIEAERNRAKEDLRKQVAALAVAGAERILERQIDAAAQSDIVEKLVAEL.

A helical transmembrane segment spans residues 11–31; it reads LLAFIFFVWFCMKFVWPPIMG.

This sequence belongs to the ATPase B chain family. As to quaternary structure, F-type ATPases have 2 components, F(1) - the catalytic core - and F(0) - the membrane proton channel. F(1) has five subunits: alpha(3), beta(3), gamma(1), delta(1), epsilon(1). F(0) has three main subunits: a(1), b(2) and c(10-14). The alpha and beta chains form an alternating ring which encloses part of the gamma chain. F(1) is attached to F(0) by a central stalk formed by the gamma and epsilon chains, while a peripheral stalk is formed by the delta and b chains.

It localises to the cell inner membrane. F(1)F(0) ATP synthase produces ATP from ADP in the presence of a proton or sodium gradient. F-type ATPases consist of two structural domains, F(1) containing the extramembraneous catalytic core and F(0) containing the membrane proton channel, linked together by a central stalk and a peripheral stalk. During catalysis, ATP synthesis in the catalytic domain of F(1) is coupled via a rotary mechanism of the central stalk subunits to proton translocation. In terms of biological role, component of the F(0) channel, it forms part of the peripheral stalk, linking F(1) to F(0). This chain is ATP synthase subunit b 2, found in Pseudoalteromonas atlantica (strain T6c / ATCC BAA-1087).